Reading from the N-terminus, the 451-residue chain is Zinc finger MYND domain-containing protein 10 homolog (451 aa).

Zn(2+) is bound by residues cysteine 412, cysteine 415, cysteine 423, cysteine 426, cysteine 432, cysteine 436, histidine 444, and cysteine 448. An MYND-type zinc finger spans residues 412-448; it reads CATCQAKAKKKCACCKKVHYCSRDCQLKDWPQHKLVC.

It belongs to the ZMYND10 family. Specifically expressed in cells with flagella and motile cilia: chordotonal sensory neurons and sperm.

Its subcellular location is the cytoplasm. It is found in the cell projection. The protein resides in the cilium. The protein localises to the dynein axonemal particle. Its function is as follows. Plays a role in axonemal structure organization and motility. May be involved in axonemal pre-assembly of inner and outer dynein arms (IDA and ODA, respectively) for proper axoneme building for cilia motility. This is Zinc finger MYND domain-containing protein 10 homolog from Drosophila melanogaster (Fruit fly).